The following is a 238-amino-acid chain: Small heat shock protein, chloroplastic (238 aa).

Residues 31 to 87 (APLSTGGRTRPLSVASAAQENRDNSVDVQVSQAQNAGNQQGNAVQRRPRRAGFDISP) are disordered. The span at 58-75 (VQVSQAQNAGNQQGNAVQ) shows a compositional bias: low complexity. Positions 124–238 (AARARRRMPW…ERKVIDVQVQ (115 aa)) constitute a sHSP domain.

This sequence belongs to the small heat shock protein (HSP20) family.

Its subcellular location is the plastid. It localises to the chloroplast. The polypeptide is Small heat shock protein, chloroplastic (HSP21) (Triticum aestivum (Wheat)).